Reading from the N-terminus, the 147-residue chain is Large ribosomal subunit protein bL9 (147 aa).

It belongs to the bacterial ribosomal protein bL9 family.

Its function is as follows. Binds to the 23S rRNA. This chain is Large ribosomal subunit protein bL9, found in Citrifermentans bemidjiense (strain ATCC BAA-1014 / DSM 16622 / JCM 12645 / Bem) (Geobacter bemidjiensis).